Here is a 478-residue protein sequence, read N- to C-terminus: Cytochrome c-552 (478 aa).

An N-terminal signal peptide occupies residues 1–26; that stretch reads MARKTLRARRFFSLIFPFFFITSVYA. Residue histidine 94 coordinates heme c. Heme contacts are provided by cysteine 122, cysteine 125, and lysine 126. Heme c contacts are provided by cysteine 160, cysteine 163, histidine 164, cysteine 209, cysteine 212, and histidine 213. Residues glutamate 215, tyrosine 216, lysine 261, and glutamine 263 each contribute to the Ca(2+) site. Tyrosine 216 contacts substrate. A substrate-binding site is contributed by histidine 264. The heme c site is built by histidine 275, cysteine 282, cysteine 285, histidine 286, histidine 301, cysteine 314, cysteine 317, histidine 318, and histidine 393.

It belongs to the cytochrome c-552 family. Requires Ca(2+) as cofactor. The cofactor is heme c.

It is found in the periplasm. It carries out the reaction 6 Fe(III)-[cytochrome c] + NH4(+) + 2 H2O = 6 Fe(II)-[cytochrome c] + nitrite + 8 H(+). The protein operates within nitrogen metabolism; nitrate reduction (assimilation). Catalyzes the reduction of nitrite to ammonia, consuming six electrons in the process. This is Cytochrome c-552 from Salmonella gallinarum (strain 287/91 / NCTC 13346).